Here is a 357-residue protein sequence, read N- to C-terminus: Guanine nucleotide-binding protein alpha-1 subunit (357 aa).

Residue Gly2 is the site of N-myristoyl glycine attachment. Cys4 carries S-palmitoyl cysteine lipidation. A G-alpha domain is found at 32 to 357 (NIIKLLLLGA…STKLKGCGLY (326 aa)). Positions 35 to 48 (KLLLLGAGESGKST) are G1 motif. Residues Glu43, Ser44, Gly45, Lys46, Ser47, Thr48, Asp151, Leu176, Thr182, Gly204, Asn270, Lys271, Asp273, and Ala329 each coordinate GTP. Ser47 serves as a coordination point for Mg(2+). The segment at 174–182 (DILHTRVPT) is G2 motif. Thr182 serves as a coordination point for Mg(2+). The interval 197–206 (FRVFDVGGQR) is G3 motif. The tract at residues 266–273 (ILFLNKID) is G4 motif. The segment at 327–332 (TCATDT) is G5 motif.

This sequence belongs to the G-alpha family. G proteins are composed of 3 units; alpha, beta and gamma. The alpha chain contains the guanine nucleotide binding site. Mg(2+) serves as cofactor.

Guanine nucleotide-binding proteins (G proteins) are involved as modulators or transducers in various transmembrane signaling systems. This is Guanine nucleotide-binding protein alpha-1 subunit (gpa-1) from Caenorhabditis elegans.